The primary structure comprises 510 residues: MRKFIAALRLALAAAAHLLLTLPPAQCYWLNPEIYDAGGLSRRAFPEGFVFGTAASAYQVEGMAKQGGRGPSIWDAFIEKPGTIPNNATADVTVDEYHRYKEDVNIMKNMGFDAYRFSISWSRIFPNGTGMVNQEGVDYYNRLIDYMVKKGIKPYANLYHYDLPLALHEQYLGWLSPNIVEAFADYADFCFQTFGDRVKDWFTFNEPRCVAALGYDNGFHAPGRCSGCDAGGNSTTEPYLAAHHLILSHAAAVKRYREKYQLYQKGRIGILLDFVWYEPFSDSNADRAAAQRARDFHLGWFLDPIIHGRYPYSMLEIVKDRMPTFSDEESRMVKDSIDYVGINHYTSFYMKDPGPWNLTPTSYQDDWHVGFAYERNGVPIGAQANSYWLYIVPWGINKAVTYVKETYGNPTMILSENGMDQPGNVSITQGVHDTVRIRYYRNYITELKKAIDDGAKVIGYFAWSLLDNFEWRLGYTSRFGIVYVDYKTLKRYPKDSAFWFKNMLSSKKRN.

Residues Met1–Cys27 form the signal peptide. Gln59 lines the a beta-D-glucoside pocket. N-linked (GlcNAc...) asparagine glycosylation is found at Asn87 and Asn127. Residues His160 and Asn205–Glu206 each bind a beta-D-glucoside. The Proton donor role is filled by Glu206. An intrachain disulfide couples Cys225 to Cys228. N-linked (GlcNAc...) asparagine glycosylation occurs at Asn233. A beta-D-glucoside is bound by residues Tyr345 and Glu416. Glu416 acts as the Nucleophile in catalysis. An N-linked (GlcNAc...) asparagine glycan is attached at Asn424. A beta-D-glucoside-binding positions include Trp463, Glu470–Trp471, and Phe479.

The protein belongs to the glycosyl hydrolase 1 family.

The enzyme catalyses Hydrolysis of terminal, non-reducing beta-D-glucosyl residues with release of beta-D-glucose.. Its function is as follows. Hydrolyzes p-nitrophenyl beta-D-glucoside, p-nitrophenyl beta-D-mannoside, p-nitrophenyl beta-D-galactoside, p-nitrophenyl beta-D-xyloside, p-nitrophenyl beta-D-fucoside, p-nitrophenyl beta-L-arabinoside, cello-oligosaccharides, laminari-oligosaccharides and sophorose. This chain is Beta-glucosidase 26 (BGLU26), found in Oryza sativa subsp. japonica (Rice).